Here is a 424-residue protein sequence, read N- to C-terminus: CinA-like protein (424 aa).

Belongs to the CinA family.

The polypeptide is CinA-like protein (Shewanella woodyi (strain ATCC 51908 / MS32)).